A 194-amino-acid polypeptide reads, in one-letter code: Imidazoleglycerol-phosphate dehydratase (194 aa).

It belongs to the imidazoleglycerol-phosphate dehydratase family.

It is found in the cytoplasm. It carries out the reaction D-erythro-1-(imidazol-4-yl)glycerol 3-phosphate = 3-(imidazol-4-yl)-2-oxopropyl phosphate + H2O. It functions in the pathway amino-acid biosynthesis; L-histidine biosynthesis; L-histidine from 5-phospho-alpha-D-ribose 1-diphosphate: step 6/9. The chain is Imidazoleglycerol-phosphate dehydratase from Bacillus velezensis (strain DSM 23117 / BGSC 10A6 / LMG 26770 / FZB42) (Bacillus amyloliquefaciens subsp. plantarum).